The primary structure comprises 61 residues: Small ribosomal subunit protein uS14B (61 aa).

4 residues coordinate Zn(2+): cysteine 24, cysteine 27, cysteine 40, and cysteine 43.

The protein belongs to the universal ribosomal protein uS14 family. Zinc-binding uS14 subfamily. In terms of assembly, part of the 30S ribosomal subunit. Contacts proteins S3 and S10. Requires Zn(2+) as cofactor.

Binds 16S rRNA, required for the assembly of 30S particles and may also be responsible for determining the conformation of the 16S rRNA at the A site. The sequence is that of Small ribosomal subunit protein uS14B from Salinispora arenicola (strain CNS-205).